The primary structure comprises 282 residues: Nucleotide-binding protein Shew_3314 (282 aa).

8–15 (GRSGSGKS) provides a ligand contact to ATP. 56-59 (DVRN) contacts GTP.

The protein belongs to the RapZ-like family.

Functionally, displays ATPase and GTPase activities. The chain is Nucleotide-binding protein Shew_3314 from Shewanella loihica (strain ATCC BAA-1088 / PV-4).